Here is a 461-residue protein sequence, read N- to C-terminus: Cysteine--tRNA ligase (461 aa).

Cys28 contacts Zn(2+). The 'HIGH' region signature appears at Ile30–His40. Residues Cys209, His234, and Glu238 each coordinate Zn(2+). A 'KMSKS' region motif is present at residues Lys266–Ser270. Lys269 provides a ligand contact to ATP.

This sequence belongs to the class-I aminoacyl-tRNA synthetase family. As to quaternary structure, monomer. It depends on Zn(2+) as a cofactor.

The protein resides in the cytoplasm. The enzyme catalyses tRNA(Cys) + L-cysteine + ATP = L-cysteinyl-tRNA(Cys) + AMP + diphosphate. In Escherichia coli O6:K15:H31 (strain 536 / UPEC), this protein is Cysteine--tRNA ligase.